Here is a 488-residue protein sequence, read N- to C-terminus: 3-octaprenyl-4-hydroxybenzoate carboxy-lyase (488 aa).

N172 provides a ligand contact to Mn(2+). Prenylated FMN is bound by residues 175–177, 189–191, and 194–195; these read IYR, RWL, and RG. E238 contacts Mn(2+). D287 (proton donor) is an active-site residue.

The protein belongs to the UbiD family. In terms of assembly, homohexamer. Prenylated FMN serves as cofactor. It depends on Mn(2+) as a cofactor.

The protein localises to the cell membrane. The enzyme catalyses a 4-hydroxy-3-(all-trans-polyprenyl)benzoate + H(+) = a 2-(all-trans-polyprenyl)phenol + CO2. Its pathway is cofactor biosynthesis; ubiquinone biosynthesis. Its function is as follows. Catalyzes the decarboxylation of 3-octaprenyl-4-hydroxy benzoate to 2-octaprenylphenol, an intermediate step in ubiquinone biosynthesis. This chain is 3-octaprenyl-4-hydroxybenzoate carboxy-lyase, found in Pseudomonas syringae pv. syringae (strain B728a).